Consider the following 200-residue polypeptide: Coiled-coil domain-containing protein 85B (200 aa).

The stretch at 57-84 (LQGHLLEIRELKVINQRLQEENQELRDL) forms a coiled coil. A compositionally biased stretch (low complexity) spans 178–188 (DGSSSTGSVGS). Positions 178–200 (DGSSSTGSVGSPDQLHLVCSPDD) are disordered.

The protein belongs to the CCDC85 family.

It localises to the nucleus. The protein resides in the cytoplasm. It is found in the cytoskeleton. The protein localises to the microtubule organizing center. Its subcellular location is the centrosome. It localises to the cell junction. The protein resides in the adherens junction. Functions as a transcriptional repressor. May inhibit the activity of CTNNB1 in a TP53-dependent manner and thus regulate cell growth. May function in adipocyte differentiation, negatively regulating mitotic clonal expansion. Plays a role in cell-cell adhesion and epithelium development through its interaction with proteins of the beta-catenin family. In Danio rerio (Zebrafish), this protein is Coiled-coil domain-containing protein 85B (ccdc85b).